The chain runs to 275 residues: Glycerol-3-phosphate dehydrogenase [NAD(P)+] (275 aa).

NADPH-binding residues include tryptophan 12, arginine 32, and lysine 105. Sn-glycerol 3-phosphate contacts are provided by lysine 105, glycine 133, and threonine 135. Alanine 137 contacts NADPH. Positions 188, 241, 251, 252, and 253 each coordinate sn-glycerol 3-phosphate. Lysine 188 acts as the Proton acceptor in catalysis. An NADPH-binding site is contributed by arginine 252.

The protein belongs to the NAD-dependent glycerol-3-phosphate dehydrogenase family.

The protein resides in the cytoplasm. The catalysed reaction is sn-glycerol 3-phosphate + NAD(+) = dihydroxyacetone phosphate + NADH + H(+). The enzyme catalyses sn-glycerol 3-phosphate + NADP(+) = dihydroxyacetone phosphate + NADPH + H(+). The protein operates within membrane lipid metabolism; glycerophospholipid metabolism. In terms of biological role, catalyzes the reduction of the glycolytic intermediate dihydroxyacetone phosphate (DHAP) to sn-glycerol 3-phosphate (G3P), the key precursor for phospholipid synthesis. The polypeptide is Glycerol-3-phosphate dehydrogenase [NAD(P)+] (Paramagnetospirillum magneticum (strain ATCC 700264 / AMB-1) (Magnetospirillum magneticum)).